Consider the following 259-residue polypeptide: Sesquipedalian-2 (259 aa).

The PH domain occupies 17–121 (PADHTGFLRS…WVKALSRASF (105 aa)). A coiled-coil region spans residues 124 to 150 (MRLVVRELESQLQDARQSLALHRCASQ). The tract at residues 155–178 (SCSKSQAPDHRAPDPENGHFLPRD) is disordered. The segment covering 161–178 (APDHRAPDPENGHFLPRD) has biased composition (basic and acidic residues). The F&amp;H motif lies at 223 to 235 (CFSTLHDWYGKEI).

This sequence belongs to the sesquipedalian family. As to quaternary structure, forms homodimers and heterodimers with PHETA1. Interacts with OCRL and INPP5B.

The protein localises to the early endosome. Its subcellular location is the recycling endosome. The protein resides in the golgi apparatus. It is found in the trans-Golgi network. It localises to the cytoplasmic vesicle. The protein localises to the clathrin-coated vesicle. Plays a role in endocytic trafficking. Required for receptor recycling from endosomes, both to the trans-Golgi network and the plasma membrane. The polypeptide is Sesquipedalian-2 (Mus musculus (Mouse)).